A 70-amino-acid chain; its full sequence is Small, acid-soluble spore protein alpha (70 aa).

The protein belongs to the alpha/beta-type SASP family.

SASP are bound to spore DNA. They are double-stranded DNA-binding proteins that cause DNA to change to an a-like conformation. They protect the DNA backbone from chemical and enzymatic cleavage and are thus involved in dormant spore's high resistance to UV light. The chain is Small, acid-soluble spore protein alpha from Paraclostridium bifermentans (Clostridium bifermentans).